The primary structure comprises 662 residues: DNA ligase (662 aa).

Residues 31-35 (DKDYD) and 79-80 (SL) each bind NAD(+). The N6-AMP-lysine intermediate role is filled by Lys121. Residues Arg143, Glu177, and Lys313 each contribute to the NAD(+) site. Zn(2+)-binding residues include Cys406, Cys409, Cys422, and Cys428. In terms of domain architecture, BRCT spans 586-662 (VLESPFMGKT…LSEEEFENMI (77 aa)).

The protein belongs to the NAD-dependent DNA ligase family. LigA subfamily. Mg(2+) is required as a cofactor. It depends on Mn(2+) as a cofactor.

It carries out the reaction NAD(+) + (deoxyribonucleotide)n-3'-hydroxyl + 5'-phospho-(deoxyribonucleotide)m = (deoxyribonucleotide)n+m + AMP + beta-nicotinamide D-nucleotide.. In terms of biological role, DNA ligase that catalyzes the formation of phosphodiester linkages between 5'-phosphoryl and 3'-hydroxyl groups in double-stranded DNA using NAD as a coenzyme and as the energy source for the reaction. It is essential for DNA replication and repair of damaged DNA. The sequence is that of DNA ligase from Clostridium perfringens (strain ATCC 13124 / DSM 756 / JCM 1290 / NCIMB 6125 / NCTC 8237 / Type A).